Consider the following 143-residue polypeptide: Lysozyme C (143 aa).

A signal peptide spans 1–15 (MKIPVFLLLLALANA). A C-type lysozyme domain is found at 16-143 (KVFQRCEWAR…LSAYIAGCGL (128 aa)). 4 disulfide bridges follow: C21-C141, C45-C129, C79-C94, and C90-C108. Catalysis depends on residues E50 and D67.

This sequence belongs to the glycosyl hydrolase 22 family. As to quaternary structure, monomer.

It localises to the secreted. The enzyme catalyses Hydrolysis of (1-&gt;4)-beta-linkages between N-acetylmuramic acid and N-acetyl-D-glucosamine residues in a peptidoglycan and between N-acetyl-D-glucosamine residues in chitodextrins.. In terms of biological role, lysozymes have primarily a bacteriolytic function; those in tissues and body fluids are associated with the monocyte-macrophage system and enhance the activity of immunoagents. The chain is Lysozyme C from Takifugu rubripes (Japanese pufferfish).